Consider the following 507-residue polypeptide: Histidine ammonia-lyase (507 aa).

A cross-link (5-imidazolinone (Ala-Gly)) is located at residues 145 to 147; it reads ASG. Serine 146 is modified (2,3-didehydroalanine (Ser)).

This sequence belongs to the PAL/histidase family. Post-translationally, contains an active site 4-methylidene-imidazol-5-one (MIO), which is formed autocatalytically by cyclization and dehydration of residues Ala-Ser-Gly.

It is found in the cytoplasm. The enzyme catalyses L-histidine = trans-urocanate + NH4(+). It functions in the pathway amino-acid degradation; L-histidine degradation into L-glutamate; N-formimidoyl-L-glutamate from L-histidine: step 1/3. This is Histidine ammonia-lyase from Treponema denticola (strain ATCC 35405 / DSM 14222 / CIP 103919 / JCM 8153 / KCTC 15104).